The following is a 511-amino-acid chain: 2,3-bisphosphoglycerate-independent phosphoglycerate mutase (511 aa).

2 residues coordinate Mn(2+): Asp-12 and Ser-62. Ser-62 (phosphoserine intermediate) is an active-site residue. Substrate is bound by residues His-123, 153 to 154 (RD), Arg-185, Arg-191, 260 to 263 (RPDR), and Lys-335. Positions 402, 406, 443, 444, and 462 each coordinate Mn(2+).

Belongs to the BPG-independent phosphoglycerate mutase family. As to quaternary structure, monomer. Mn(2+) serves as cofactor.

It carries out the reaction (2R)-2-phosphoglycerate = (2R)-3-phosphoglycerate. It participates in carbohydrate degradation; glycolysis; pyruvate from D-glyceraldehyde 3-phosphate: step 3/5. In terms of biological role, catalyzes the interconversion of 2-phosphoglycerate and 3-phosphoglycerate. The protein is 2,3-bisphosphoglycerate-independent phosphoglycerate mutase of Acetivibrio thermocellus (strain ATCC 27405 / DSM 1237 / JCM 9322 / NBRC 103400 / NCIMB 10682 / NRRL B-4536 / VPI 7372) (Clostridium thermocellum).